The chain runs to 254 residues: Aspartate/glutamate leucyltransferase (254 aa).

It belongs to the R-transferase family. Bpt subfamily.

It is found in the cytoplasm. The catalysed reaction is N-terminal L-glutamyl-[protein] + L-leucyl-tRNA(Leu) = N-terminal L-leucyl-L-glutamyl-[protein] + tRNA(Leu) + H(+). It catalyses the reaction N-terminal L-aspartyl-[protein] + L-leucyl-tRNA(Leu) = N-terminal L-leucyl-L-aspartyl-[protein] + tRNA(Leu) + H(+). In terms of biological role, functions in the N-end rule pathway of protein degradation where it conjugates Leu from its aminoacyl-tRNA to the N-termini of proteins containing an N-terminal aspartate or glutamate. This is Aspartate/glutamate leucyltransferase from Xylella fastidiosa (strain M23).